A 507-amino-acid polypeptide reads, in one-letter code: O-fucosyltransferase 30 (507 aa).

A helical; Signal-anchor for type II membrane protein transmembrane segment spans residues 26–46; the sequence is AIFLCSVSILVVFFIVVFFIT. N-linked (GlcNAc...) asparagine glycosylation is found at Asn-110, Asn-146, Asn-398, and Asn-410.

The protein belongs to the glycosyltransferase GT106 family.

The protein localises to the membrane. Its pathway is glycan metabolism. The chain is O-fucosyltransferase 30 from Arabidopsis thaliana (Mouse-ear cress).